A 366-amino-acid polypeptide reads, in one-letter code: tRNA/tmRNA (uracil-C(5))-methyltransferase (366 aa).

S-adenosyl-L-methionine-binding residues include glutamine 190, tyrosine 218, asparagine 223, glutamate 239, and aspartate 299. Cysteine 324 (nucleophile) is an active-site residue. Residue glutamate 358 is the Proton acceptor of the active site.

It belongs to the class I-like SAM-binding methyltransferase superfamily. RNA M5U methyltransferase family. TrmA subfamily.

The catalysed reaction is uridine(54) in tRNA + S-adenosyl-L-methionine = 5-methyluridine(54) in tRNA + S-adenosyl-L-homocysteine + H(+). The enzyme catalyses uridine(341) in tmRNA + S-adenosyl-L-methionine = 5-methyluridine(341) in tmRNA + S-adenosyl-L-homocysteine + H(+). In terms of biological role, dual-specificity methyltransferase that catalyzes the formation of 5-methyluridine at position 54 (m5U54) in all tRNAs, and that of position 341 (m5U341) in tmRNA (transfer-mRNA). In Cronobacter sakazakii (strain ATCC BAA-894) (Enterobacter sakazakii), this protein is tRNA/tmRNA (uracil-C(5))-methyltransferase.